The following is a 256-amino-acid chain: Trypsin, alkaline C (256 aa).

The first 17 residues, 1 to 17, serve as a signal peptide directing secretion; that stretch reads MRLFLALLALGFAAVAA. A propeptide spans 18-24 (activation peptide); the sequence is VPANPQR. Residues 25–256 enclose the Peptidase S1 domain; sequence IVGGSTTTIQ…RYTSWISNNS (232 aa). Cysteines 55 and 71 form a disulfide. Residues histidine 70 and aspartate 115 each act as charge relay system in the active site. 2 disulfides stabilise this stretch: cysteine 180–cysteine 197 and cysteine 209–cysteine 233. Serine 213 acts as the Charge relay system in catalysis.

Belongs to the peptidase S1 family. In terms of tissue distribution, midgut.

The protein resides in the secreted. Its subcellular location is the extracellular space. The catalysed reaction is Preferential cleavage: Arg-|-Xaa, Lys-|-Xaa.. The chain is Trypsin, alkaline C from Manduca sexta (Tobacco hawkmoth).